Consider the following 647-residue polypeptide: Putative pre-mRNA-splicing factor ATP-dependent RNA helicase C20H4.09 (647 aa).

In terms of domain architecture, Helicase ATP-binding spans 35–199 (LYAVEQNQIT…FGQDKVCTMS (165 aa)). 48-55 (GHTGCGKT) is a binding site for ATP. Positions 146–149 (DEVH) match the DEAH box motif. A Helicase C-terminal domain is found at 219–398 (YVDSAIETVI…PLVLFLKGLG (180 aa)).

Belongs to the DEAD box helicase family. DEAH subfamily.

The protein localises to the nucleus. The catalysed reaction is ATP + H2O = ADP + phosphate + H(+). Its function is as follows. Pre-mRNA processing factor involved in disassembly of spliceosomes after the release of mature mRNA. This Schizosaccharomyces pombe (strain 972 / ATCC 24843) (Fission yeast) protein is Putative pre-mRNA-splicing factor ATP-dependent RNA helicase C20H4.09.